A 349-amino-acid chain; its full sequence is Gibberellin 3-beta-dioxygenase 3 (349 aa).

A Fe2OG dioxygenase domain is found at 201–305 (SIQSFLQLNS…RVSAAYFAGP (105 aa)). The Fe cation site is built by H226, D228, and H286. The active site involves R296.

Belongs to the iron/ascorbate-dependent oxidoreductase family. GA3OX subfamily. The cofactor is L-ascorbate. It depends on Fe cation as a cofactor. As to expression, expressed in flower clusters and siliques.

It catalyses the reaction gibberellin A20 + 2-oxoglutarate + O2 = gibberellin A1 + succinate + CO2. It participates in plant hormone biosynthesis; gibberellin biosynthesis. Converts the inactive gibberellin (GA) precursors GA9 and GA20 in the bioactives gibberellins GA4 and GA1. Involved in the production of bioactive GA for reproductive development. This Arabidopsis thaliana (Mouse-ear cress) protein is Gibberellin 3-beta-dioxygenase 3 (GA3OX3).